A 658-amino-acid chain; its full sequence is Translation factor GUF1, mitochondrial (658 aa).

The N-terminal 40 residues, 1–40 (MRGCLQTVRWLTSAWQRPPSYPPLSRAAPCRFFNVSIPRN), are a transit peptide targeting the mitochondrion. Residues 60–240 (DRFRNFCIVA…TVVEQIPAPV (181 aa)) enclose the tr-type G domain. GTP-binding positions include 69–76 (AHVDHGKS), 133–137 (DTPGH), and 187–190 (NKVD).

It belongs to the TRAFAC class translation factor GTPase superfamily. Classic translation factor GTPase family. LepA subfamily.

It localises to the mitochondrion inner membrane. The catalysed reaction is GTP + H2O = GDP + phosphate + H(+). Its function is as follows. Promotes mitochondrial protein synthesis. May act as a fidelity factor of the translation reaction, by catalyzing a one-codon backward translocation of tRNAs on improperly translocated ribosomes. Binds to mitochondrial ribosomes in a GTP-dependent manner. The polypeptide is Translation factor GUF1, mitochondrial (Paracoccidioides brasiliensis (strain Pb18)).